Consider the following 557-residue polypeptide: Potassium-transporting ATPase potassium-binding subunit (557 aa).

Transmembrane regions (helical) follow at residues 5–25 (GFLL…PLGS), 63–83 (LCAI…MLLG), 132–152 (GLTV…FALI), 170–190 (LLRI…LFFI), 253–273 (FVQM…FGEV), 283–303 (LLWA…WAEV), 329–349 (VLVS…AVIA), 356–376 (ALGG…FGGV), 379–399 (GLYG…LMIG), 416–436 (LTAL…ALAM), 484–504 (LLAF…MAIA), and 526–546 (LFVG…FIPA).

The protein belongs to the KdpA family. As to quaternary structure, the system is composed of three essential subunits: KdpA, KdpB and KdpC.

The protein localises to the cell inner membrane. Part of the high-affinity ATP-driven potassium transport (or Kdp) system, which catalyzes the hydrolysis of ATP coupled with the electrogenic transport of potassium into the cytoplasm. This subunit binds the periplasmic potassium ions and delivers the ions to the membrane domain of KdpB through an intramembrane tunnel. This is Potassium-transporting ATPase potassium-binding subunit from Escherichia coli O9:H4 (strain HS).